The primary structure comprises 465 residues: Argininosuccinate lyase (465 aa).

This sequence belongs to the lyase 1 family. Argininosuccinate lyase subfamily.

Its subcellular location is the cytoplasm. It carries out the reaction 2-(N(omega)-L-arginino)succinate = fumarate + L-arginine. It functions in the pathway amino-acid biosynthesis; L-arginine biosynthesis; L-arginine from L-ornithine and carbamoyl phosphate: step 3/3. The polypeptide is Argininosuccinate lyase (Methanosphaera stadtmanae (strain ATCC 43021 / DSM 3091 / JCM 11832 / MCB-3)).